Here is a 331-residue protein sequence, read N- to C-terminus: 5'-AMP-activated protein kinase subunit gamma-1 (331 aa).

The segment covering 1–12 (METVISSDSSPA) has biased composition (polar residues). Residues 1-26 (METVISSDSSPAVENEHPQETPESNN) are disordered. CBS domains follow at residues 43-103 (PTSS…KSAL), 125-187 (SFKP…PKPE), and 198-260 (IGTY…NLDV). ADP contacts are provided by residues Arg-70, 85–90 (MLTITD), Val-130, 151–152 (HR), and Lys-170. Residues Arg-70, 85-90 (MLTITD), Val-130, His-151, 151-152 (HR), Lys-170, Thr-200, Ala-205, 226-227 (SA), and 242-245 (SKFD) each bind AMP. ATP contacts are provided by residues Arg-70, 85-90 (MLTITD), Val-130, 151-152 (HR), Arg-152, and Lys-170. Positions 138-159 (LFDAVSSLIRNKIHRLPVIDPE) match the AMPK pseudosubstrate motif. Position 242-245 (242-245 (SKFD)) interacts with ADP. 242–245 (SKFD) contacts ATP. The residue at position 261 (Ser-261) is a Phosphoserine; by ULK1. Thr-263 bears the Phosphothreonine; by ULK1 mark. Arg-269 contributes to the ADP binding site. Arg-269 lines the AMP pocket. Residue Arg-269 coordinates ATP. Phosphoserine; by ULK1 is present on Ser-270. A CBS 4 domain is found at 272–329 (YFEGVLKCYLHETLETIINRLVEAEVHRLVVVDENDVVKGIVSLSDILQALVLTGGEK). ADP-binding positions include Leu-277 and 298–299 (HR). AMP contacts are provided by residues Leu-277, His-298, 298–299 (HR), and 314–317 (SLSD). Residues Leu-277 and 298–299 (HR) contribute to the ATP site.

The protein belongs to the 5'-AMP-activated protein kinase gamma subunit family. AMPK is a heterotrimer of an alpha catalytic subunit (PRKAA1 or PRKAA2), a beta (PRKAB1 or PRKAB2) and a gamma non-catalytic subunits (PRKAG1, PRKAG2 or PRKAG3). Interacts with FNIP1 and FNIP2. In terms of processing, phosphorylated by ULK1 and ULK2; leading to negatively regulate AMPK activity and suggesting the existence of a regulatory feedback loop between ULK1, ULK2 and AMPK. Post-translationally, glycosylated; O-GlcNAcylated by OGT, promoting the AMP-activated protein kinase (AMPK) activity.

Its function is as follows. AMP/ATP-binding subunit of AMP-activated protein kinase (AMPK), an energy sensor protein kinase that plays a key role in regulating cellular energy metabolism. In response to reduction of intracellular ATP levels, AMPK activates energy-producing pathways and inhibits energy-consuming processes: inhibits protein, carbohydrate and lipid biosynthesis, as well as cell growth and proliferation. AMPK acts via direct phosphorylation of metabolic enzymes, and by longer-term effects via phosphorylation of transcription regulators. Also acts as a regulator of cellular polarity by remodeling the actin cytoskeleton; probably by indirectly activating myosin. Gamma non-catalytic subunit mediates binding to AMP, ADP and ATP, leading to activate or inhibit AMPK: AMP-binding results in allosteric activation of alpha catalytic subunit (PRKAA1 or PRKAA2) both by inducing phosphorylation and preventing dephosphorylation of catalytic subunits. ADP also stimulates phosphorylation, without stimulating already phosphorylated catalytic subunit. ATP promotes dephosphorylation of catalytic subunit, rendering the AMPK enzyme inactive. In Homo sapiens (Human), this protein is 5'-AMP-activated protein kinase subunit gamma-1 (PRKAG1).